The chain runs to 485 residues: Aspartyl/glutamyl-tRNA(Asn/Gln) amidotransferase subunit B (485 aa).

This sequence belongs to the GatB/GatE family. GatB subfamily. As to quaternary structure, heterotrimer of A, B and C subunits.

It catalyses the reaction L-glutamyl-tRNA(Gln) + L-glutamine + ATP + H2O = L-glutaminyl-tRNA(Gln) + L-glutamate + ADP + phosphate + H(+). It carries out the reaction L-aspartyl-tRNA(Asn) + L-glutamine + ATP + H2O = L-asparaginyl-tRNA(Asn) + L-glutamate + ADP + phosphate + 2 H(+). In terms of biological role, allows the formation of correctly charged Asn-tRNA(Asn) or Gln-tRNA(Gln) through the transamidation of misacylated Asp-tRNA(Asn) or Glu-tRNA(Gln) in organisms which lack either or both of asparaginyl-tRNA or glutaminyl-tRNA synthetases. The reaction takes place in the presence of glutamine and ATP through an activated phospho-Asp-tRNA(Asn) or phospho-Glu-tRNA(Gln). This Paramagnetospirillum magneticum (strain ATCC 700264 / AMB-1) (Magnetospirillum magneticum) protein is Aspartyl/glutamyl-tRNA(Asn/Gln) amidotransferase subunit B.